Reading from the N-terminus, the 397-residue chain is Mannitol-1-phosphate 5-dehydrogenase (397 aa).

9 to 20 (AVHFGAGNIGRG) contributes to the NAD(+) binding site. Residue Lys-220 is part of the active site.

The protein belongs to the mannitol dehydrogenase family. In terms of assembly, monomer.

It carries out the reaction D-mannitol 1-phosphate + NAD(+) = beta-D-fructose 6-phosphate + NADH + H(+). Its function is as follows. Catalyzes the NAD(H)-dependent interconversion of D-fructose 6-phosphate and D-mannitol 1-phosphate in the mannitol metabolic pathway. The protein is Mannitol-1-phosphate 5-dehydrogenase of Podospora anserina (strain S / ATCC MYA-4624 / DSM 980 / FGSC 10383) (Pleurage anserina).